We begin with the raw amino-acid sequence, 417 residues long: Phosphoglycerate kinase 1 (417 aa).

Ser-2 is subject to N-acetylserine. Phosphoserine is present on residues Ser-2 and Ser-4. Lys-6 is modified (N6-succinyllysine). Lys-11 carries the post-translational modification N6-acetyllysine. (2R)-3-phosphoglycerate-binding residues include Val-23, Asp-24, Phe-25, Asn-26, Gln-38, and Arg-39. A mitochondrial targeting region exposed following cis-trans isomerization by PIN1 and recognized by the TOM complex for mitochondrial translocation of the protein region spans residues 38-43; sequence QRIKAA. Lys-48 is subject to N6-acetyllysine; alternate. Lys-48 is subject to N6-succinyllysine; alternate. Residues Ser-62, His-63, Gly-65, and Arg-66 each contribute to the (2R)-3-phosphoglycerate site. N6-acetyllysine is present on Lys-75. The residue at position 76 (Tyr-76) is a Phosphotyrosine. 2 positions are modified to N6-acetyllysine: Lys-86 and Lys-91. Lys-97 bears the N6-acetyllysine; alternate mark. Lys-97 is modified (N6-(2-hydroxyisobutyryl)lysine; alternate). The (2R)-3-phosphoglycerate site is built by Leu-122 and Arg-123. At Lys-131 the chain carries N6-acetyllysine; alternate. Position 131 is an N6-malonyllysine; alternate (Lys-131). Position 146 is an N6-acetyllysine (Lys-146). (2R)-3-phosphoglycerate-binding residues include His-170 and Arg-171. At Lys-191 the chain carries N6-succinyllysine. Tyr-196 is subject to Phosphotyrosine. Lys-199 carries the N6-acetyllysine modification. Phosphoserine is present on Ser-203. Residue Gly-214 coordinates ADP. Gly-214 contacts CDP. AMP is bound by residues Ala-215 and Lys-216. Ala-215 is a binding site for ATP. Mg(2+) is bound at residue Ala-215. An N6-(2-hydroxyisobutyryl)lysine modification is found at Lys-216. 2 residues coordinate Mg(2+): Ala-218 and Asp-219. A CDP-binding site is contributed by Asp-219. Lys-220 lines the AMP pocket. Lys-220 provides a ligand contact to ATP. Lys-220 carries the post-translational modification N6-(2-hydroxyisobutyryl)lysine. Residue Gly-238 participates in ADP binding. Gly-238 contacts CDP. Residue Gly-239 coordinates AMP. Residue Gly-239 coordinates ATP. 2 positions are modified to N6-acetyllysine: Lys-267 and Lys-291. Gly-313 contributes to the AMP binding site. Gly-313 is an ATP binding site. Residue Lys-323 is modified to N6-(2-hydroxyisobutyryl)lysine. The CDP site is built by Gly-338, Val-340, and Phe-343. Position 343 (Phe-343) interacts with ADP. An AMP-binding site is contributed by Glu-344. Glu-344 serves as a coordination point for ATP. Lys-361 carries the N6-acetyllysine modification. Residues Asp-375 and Thr-376 each contribute to the ATP site. Asp-375 lines the Mg(2+) pocket.

Belongs to the phosphoglycerate kinase family. As to quaternary structure, monomer. Interacts with kinase MAPK1/ERK2; the interaction is direct, occurs under hypoxic conditions, and promotes its interaction with PIN1. Interacts with peptidyl-prolyl cis-trans isomerase PIN1; the interaction is direct, occurs under hypoxic conditions, and targets the protein to the mitochondrion by promoting interactions with the TOM complex. Interacts with mitochondrial circRNA mcPGK1 (via its 2nd stem-loop); the interaction is direct and targets the protein to the mitochondrion by promoting interactions with the TOM complex. Interacts with pyruvate dehydrogenase kinase PDK1; the interaction is direct, occurs under hypoxic conditions and leads to PDK1-mediated inhibition of pyruvate dehydrogenase complex activity. Requires Mg(2+) as cofactor. In terms of processing, phosphorylated at Ser-203 by MAPK1/ERK2 under hypoxic conditions, which promotes its mitochondrial targeting.

It is found in the cytoplasm. The protein resides in the cytosol. The protein localises to the mitochondrion matrix. The catalysed reaction is (2R)-3-phosphoglycerate + ATP = (2R)-3-phospho-glyceroyl phosphate + ADP. It catalyses the reaction L-seryl-[protein] + ATP = O-phospho-L-seryl-[protein] + ADP + H(+). It participates in carbohydrate degradation; glycolysis; pyruvate from D-glyceraldehyde 3-phosphate: step 2/5. Functionally, catalyzes one of the two ATP producing reactions in the glycolytic pathway via the reversible conversion of 1,3-diphosphoglycerate to 3-phosphoglycerate. Both L- and D- forms of purine and pyrimidine nucleotides can be used as substrates, but the activity is much lower on pyrimidines. In addition to its role as a glycolytic enzyme, it seems that PGK-1 acts as a polymerase alpha cofactor protein (primer recognition protein). Acts as a protein kinase when localized to the mitochondrion where it phosphorylates pyruvate dehydrogenase kinase PDK1 to inhibit pyruvate dehydrogenase complex activity and suppress the formation of acetyl-coenzyme A from pyruvate, and consequently inhibit oxidative phosphorylation and promote glycolysis. May play a role in sperm motility. In Macaca fascicularis (Crab-eating macaque), this protein is Phosphoglycerate kinase 1 (PGK1).